Here is a 284-residue protein sequence, read N- to C-terminus: Tryptophan 2,3-dioxygenase (284 aa).

Substrate is bound by residues 51 to 55, Y113, and R117; that span reads FIIQH. H240 serves as a coordination point for heme. T254 provides a ligand contact to substrate.

This sequence belongs to the tryptophan 2,3-dioxygenase family. Homotetramer. The cofactor is heme.

The catalysed reaction is L-tryptophan + O2 = N-formyl-L-kynurenine. Its pathway is amino-acid degradation; L-tryptophan degradation via kynurenine pathway; L-kynurenine from L-tryptophan: step 1/2. Functionally, heme-dependent dioxygenase that catalyzes the oxidative cleavage of the L-tryptophan (L-Trp) pyrrole ring and converts L-tryptophan to N-formyl-L-kynurenine. Catalyzes the oxidative cleavage of the indole moiety. The sequence is that of Tryptophan 2,3-dioxygenase from Arthrobacter sp. (strain FB24).